The sequence spans 117 residues: Prefoldin subunit beta (117 aa).

Belongs to the prefoldin subunit beta family. In terms of assembly, heterohexamer of two alpha and four beta subunits.

Its subcellular location is the cytoplasm. In terms of biological role, molecular chaperone capable of stabilizing a range of proteins. Seems to fulfill an ATP-independent, HSP70-like function in archaeal de novo protein folding. The sequence is that of Prefoldin subunit beta (pfdB) from Pyrococcus horikoshii (strain ATCC 700860 / DSM 12428 / JCM 9974 / NBRC 100139 / OT-3).